Here is a 210-residue protein sequence, read N- to C-terminus: Proteasome subunit beta (210 aa).

The propeptide at 1-9 (MNDKNTLKG) is removed in mature form; by autocatalysis. Residue threonine 10 is the Nucleophile of the active site.

Belongs to the peptidase T1B family. The 20S proteasome core is composed of 14 alpha and 14 beta subunits that assemble into four stacked heptameric rings, resulting in a barrel-shaped structure. The two inner rings, each composed of seven catalytic beta subunits, are sandwiched by two outer rings, each composed of seven alpha subunits. The catalytic chamber with the active sites is on the inside of the barrel. Has a gated structure, the ends of the cylinder being occluded by the N-termini of the alpha-subunits. Is capped at one or both ends by the proteasome regulatory ATPase, PAN.

It localises to the cytoplasm. The catalysed reaction is Cleavage of peptide bonds with very broad specificity.. The formation of the proteasomal ATPase PAN-20S proteasome complex, via the docking of the C-termini of PAN into the intersubunit pockets in the alpha-rings, triggers opening of the gate for substrate entry. Interconversion between the open-gate and close-gate conformations leads to a dynamic regulation of the 20S proteasome proteolysis activity. Component of the proteasome core, a large protease complex with broad specificity involved in protein degradation. The sequence is that of Proteasome subunit beta from Methanothermobacter thermautotrophicus (strain ATCC 29096 / DSM 1053 / JCM 10044 / NBRC 100330 / Delta H) (Methanobacterium thermoautotrophicum).